A 514-amino-acid chain; its full sequence is tRNA-2-methylthio-N(6)-dimethylallyladenosine synthase (514 aa).

Residues 1–21 (MNEEQRKASSVDVLAERDKKA) are disordered. One can recognise an MTTase N-terminal domain in the interval 68–186 (RTFLIKTYGC…LPEILEEAYL (119 aa)). 6 residues coordinate [4Fe-4S] cluster: Cys77, Cys113, Cys147, Cys223, Cys227, and Cys230. In terms of domain architecture, Radical SAM core spans 209–440 (REGNIKAWVN…KKVGHYSQIA (232 aa)). Residues 442–505 (SKYEGQTVTV…QYSLNGSFVK (64 aa)) enclose the TRAM domain.

It belongs to the methylthiotransferase family. MiaB subfamily. Monomer. [4Fe-4S] cluster is required as a cofactor.

Its subcellular location is the cytoplasm. The enzyme catalyses N(6)-dimethylallyladenosine(37) in tRNA + (sulfur carrier)-SH + AH2 + 2 S-adenosyl-L-methionine = 2-methylsulfanyl-N(6)-dimethylallyladenosine(37) in tRNA + (sulfur carrier)-H + 5'-deoxyadenosine + L-methionine + A + S-adenosyl-L-homocysteine + 2 H(+). Functionally, catalyzes the methylthiolation of N6-(dimethylallyl)adenosine (i(6)A), leading to the formation of 2-methylthio-N6-(dimethylallyl)adenosine (ms(2)i(6)A) at position 37 in tRNAs that read codons beginning with uridine. The protein is tRNA-2-methylthio-N(6)-dimethylallyladenosine synthase of Staphylococcus aureus (strain N315).